A 190-amino-acid chain; its full sequence is Large ribosomal subunit protein uL22 (190 aa).

The tract at residues 111–190 (SVQSTKAKAK…TKKKTEGEEK (80 aa)) is disordered. Over residues 125-147 (IKSEDSKNSLKVTESKADSKVDA) the composition is skewed to basic and acidic residues. Residues 167-178 (AKVATTKSTATR) show a composition bias toward low complexity.

It belongs to the universal ribosomal protein uL22 family. Part of the 50S ribosomal subunit.

In terms of biological role, this protein binds specifically to 23S rRNA; its binding is stimulated by other ribosomal proteins, e.g. L4, L17, and L20. It is important during the early stages of 50S assembly. It makes multiple contacts with different domains of the 23S rRNA in the assembled 50S subunit and ribosome. The globular domain of the protein is located near the polypeptide exit tunnel on the outside of the subunit, while an extended beta-hairpin is found that lines the wall of the exit tunnel in the center of the 70S ribosome. The polypeptide is Large ribosomal subunit protein uL22 (Helicobacter hepaticus (strain ATCC 51449 / 3B1)).